A 572-amino-acid polypeptide reads, in one-letter code: MDSAKTCVTKFKSFAILLFTPILMLPLVILIPDKFARCAYVIVIMAVYWCTDVIPVAVTSLLPVLLFPLLKVLDSKQVCIQYMKDTNMLFLGSLIVAVAVERWKLHKRVALRMLLFVGTKPSRLMLGFMFVTAFLSMWISNTAATAMMIPIVEAMLQQMIAANTAVEASLGTLELLDKNKTSELPGSQVVFEDPNVQEQEDEETKNMYKAMHLCVCYSASIGGTATLTGTGPNVVLLGQMQELFPDSKDVLNYASWFGFAFPNMVMMLVLAWLWLQCLYMRHNLKKTCICCGEKKRDTEKIAYKVLNEEYQKLGSLSYPECNVLFCFTLLVILWFSRDPGFMPGWLSFAWVEGNTVHITDATVAIFVAILLFIIPSQKPKFNFSSQTEEERKTPFYPPALLDWKVAQEKVPWDIVLLLGGGFAMAKGCETSGLSKWMAAQMEPLRLVKPAVITLILSCLVAMTTECTSNVATTTLFLPIFASMARSIGIHPLYVMIPCTMSASLAFMLPVATPPNAIVFAYGHLRVVDMMKTGLIMNFVGILSVFLSVNTWGRAMFNLDNFPDWANSTSVNT.

The next 8 helical transmembrane spans lie at 13–33 (SFAI…LIPD), 53–73 (VIPV…LKVL), 80–100 (IQYM…AVAV), 124–144 (LMLG…NTAA), 218–238 (SASI…VLLG), 255–275 (SWFG…WLWL), 315–335 (SLSY…ILWF), and 357–377 (HITD…IPSQ). Asn382 carries an N-linked (GlcNAc...) asparagine glycan. Helical transmembrane passes span 410-430 (VPWD…GCET), 443-463 (PLRL…VAMT), 491-511 (PLYV…LPVA), and 532-552 (TGLI…NTWG). N-linked (GlcNAc...) asparagine glycosylation occurs at Asn566.

Belongs to the SLC13A/DASS transporter (TC 2.A.47) family. NADC subfamily. In terms of assembly, homodimer.

It localises to the cell membrane. It carries out the reaction citrate(out) + 4 Na(+)(out) = citrate(in) + 4 Na(+)(in). With respect to regulation, inhibited by Li(+). Functionally, high-affinity sodium/citrate cotransporter that mediates citrate entry into cells, which is a critical participant of biochemical pathways. May function in various metabolic processes in which citrate has a critical role such as energy production (Krebs cycle), fatty acid synthesis, cholesterol synthesis, glycolysis, and gluconeogenesis. Transports citrate into the cell in a Na(+)-dependent manner, recognizing the trivalent form of citrate (physiological pH) rather than the divalent form. Can recognizes succinate as a substrate, but its affinity for succinate is several fold lower than for citrate. The stoichiometry is probably 4 Na(+) for each carboxylate, irrespective of whether the translocated substrate is divalent or trivalent, rendering the process electrogenic. Involved in the regulation of citrate levels in the brain. The chain is Na(+)/citrate cotransporter (Slc13a5) from Mus musculus (Mouse).